The sequence spans 150 residues: UPF0178 protein Bpet3884 (150 aa).

This sequence belongs to the UPF0178 family.

This is UPF0178 protein Bpet3884 from Bordetella petrii (strain ATCC BAA-461 / DSM 12804 / CCUG 43448).